Consider the following 330-residue polypeptide: D-cysteine desulfhydrase (330 aa).

K52 bears the N6-(pyridoxal phosphate)lysine mark.

Belongs to the ACC deaminase/D-cysteine desulfhydrase family. In terms of assembly, homodimer. Pyridoxal 5'-phosphate is required as a cofactor.

It carries out the reaction D-cysteine + H2O = hydrogen sulfide + pyruvate + NH4(+) + H(+). Its function is as follows. Catalyzes the alpha,beta-elimination reaction of D-cysteine and of several D-cysteine derivatives. It could be a defense mechanism against D-cysteine. The protein is D-cysteine desulfhydrase of Yersinia pestis.